The following is a 321-amino-acid chain: MRLWLCWLGCYTLLLWALRRRMWAGPARYLRSPLSRSLYANMMGSHGPPAPGAGENHQWYVCNTEQLSESLQPIFVQSYLDQGTQIFLNNSIEKSGWLFIQLYHSFVSSIFSLFMSRTSINGLLGRGSMFVFSPEQFQRLLKINPEWKSHRLLDLGAGDGEVTKVMSPHFEEIYATELSETMIWQLQKKKYRVLGINEWQNTGFQYDVISCLNLLDRCDQPLTVLKDTRSVLEPTRGRVILALVLPFHPYVENVGGKWEKPSEVLEIKGHTWEEQVNSLPEVFGKAGFAIEAFTRLPYLCEGDMYNDYYVLDDAVFVLKPV.

An N-terminal signal peptide occupies residues 1–24 (MRLWLCWLGCYTLLLWALRRRMWA). A glycan (N-linked (GlcNAc...) asparagine) is linked at Asn89. Residues Glu177, Asn213, and Tyr298 each contribute to the S-adenosyl-L-homocysteine site.

The protein belongs to the METTL9 family.

It localises to the endoplasmic reticulum. The protein localises to the mitochondrion. It catalyses the reaction L-histidyl-[protein] + S-adenosyl-L-methionine = N(pros)-methyl-L-histidyl-[protein] + S-adenosyl-L-homocysteine + H(+). In terms of biological role, protein-histidine N-methyltransferase that specifically catalyzes 1-methylhistidine (pros-methylhistidine) methylation of target proteins. Mediates methylation of proteins with a His-x-His (HxH) motif (where 'x' is preferably a small amino acid); 1-methylhistidine modification may affect the binding of zinc and other metals to its target proteins. This is Protein-L-histidine N-pros-methyltransferase from Gallus gallus (Chicken).